We begin with the raw amino-acid sequence, 205 residues long: Adenylyl-sulfate kinase (205 aa).

Residue 35 to 42 (GLSGAGKS) coordinates ATP. Ser109 acts as the Phosphoserine intermediate in catalysis.

Belongs to the APS kinase family.

The enzyme catalyses adenosine 5'-phosphosulfate + ATP = 3'-phosphoadenylyl sulfate + ADP + H(+). It participates in sulfur metabolism; hydrogen sulfide biosynthesis; sulfite from sulfate: step 2/3. In terms of biological role, catalyzes the synthesis of activated sulfate. The chain is Adenylyl-sulfate kinase from Acaryochloris marina (strain MBIC 11017).